The sequence spans 1214 residues: NBPF family member NBPF1 (1214 aa).

A coiled-coil region spans residues 70 to 128 (MLRNERQFKEEKLAEQLKQAEELRQYKVLVHSQERELTQLREKLREGRDASRSLNQHLQ). A disordered region spans residues 162–200 (LSPENDEDEDEDVQVEEAEKVLESSAPREVQKAEESKVP). The span at 165–177 (ENDEDEDEDVQVE) shows a compositional bias: acidic residues. Residues 165-259 (ENDEDEDEDV…ECQDAVNILP (95 aa)) form the Olduvai 1 domain. Over residues 190–200 (EVQKAEESKVP) the composition is skewed to basic and acidic residues. Residues 292-399 (NEKLHPQLAE…ASRSLNQHLQ (108 aa)) adopt a coiled-coil conformation. The segment at 433–471 (LSPENDEDEDEDVQVEEAEKVLESSAPREVQKAEESKVP) is disordered. Residues 436-448 (ENDEDEDEDVQVE) show a composition bias toward acidic residues. Positions 436–530 (ENDEDEDEDV…ECQDAVNILP (95 aa)) constitute an Olduvai 2 domain. Basic and acidic residues predominate over residues 461–471 (EVQKAEESKVP). The stretch at 610 to 670 (KSMLRNERQF…ASCSLNQHLQ (61 aa)) forms a coiled coil. Olduvai domains lie at 707-799 (ENDN…HIIP), 800-888 (ENES…ATGP), 891-946 (SREL…LDMD), 947-1038 (EIEK…PPCP), 1041-1114 (SREL…RSTK), and 1116-1214 (RRRR…IFPQ). 2 disordered regions span residues 722–746 (EKVQKSSAPREMPKAEEKEVPEDSL) and 791–837 (WEDA…EGYS). 2 stretches are compositionally biased toward acidic residues: residues 801 to 810 (NESDDEEEEE) and 821 to 833 (ESEEEEVPQESWD). Positions 1102-1121 (GKGKKRRGRRSTKKRRRRGR) are enriched in basic residues. A disordered region spans residues 1102–1136 (GKGKKRRGRRSTKKRRRRGRKEGEEDQNPPCPRLS).

It belongs to the NBPF family. As to expression, widely expressed. The only tissue which shows a weak expression is kidney.

The protein localises to the cytoplasm. The sequence is that of NBPF family member NBPF1 from Homo sapiens (Human).